Here is a 904-residue protein sequence, read N- to C-terminus: Phosphoenolpyruvate carboxylase (904 aa).

The disordered stretch occupies residues 52–71 (ISRRESDAPPSTLSEQLTGR). Positions 60–70 (PPSTLSEQLTG) are enriched in polar residues. Active-site residues include histidine 151 and lysine 570.

This sequence belongs to the PEPCase type 1 family. Mg(2+) is required as a cofactor.

The catalysed reaction is oxaloacetate + phosphate = phosphoenolpyruvate + hydrogencarbonate. Its function is as follows. Forms oxaloacetate, a four-carbon dicarboxylic acid source for the tricarboxylic acid cycle. This is Phosphoenolpyruvate carboxylase from Xanthomonas euvesicatoria pv. vesicatoria (strain 85-10) (Xanthomonas campestris pv. vesicatoria).